Here is a 361-residue protein sequence, read N- to C-terminus: MGLTKKKVLVGMSGGVDSSVAAYLLKEQGYEVIGATMQIWQEDKEVEEREGGCCSLSAVEDARRVCDKLDIPFYVLNFRDSFKKKVIEPFIQEYIDGRTPNPCIECNKHLKFDELLRKAQGIGVDYIATGHYAKIDKKDDRYMLIRSDDDRKDQTYALYNFTQDQLAHTLMPCGEYTKDRIREIAKEIGLAVHNKKDSEEICFISDNDHGKYILNAKPGAVKSGNFVDKSGNILGKHKGIVYYTIGQRKGLGLSVGRPVFVTDINPKTNEVVIGAEEDIFKTELIAGDLNFITFDKLEKEIEVEAKIRYSARPGKATIVPLKDGRVKVVFNEKQRAITKGQSVVFYNGNIVIGGGVIEAII.

Residues 11 to 18 and Met-37 contribute to the ATP site; that span reads GMSGGVDS. Catalysis depends on Cys-106, which acts as the Nucleophile. Cys-106 and Cys-202 are joined by a disulfide. Gly-130 lines the ATP pocket. Residues 152–154 are interaction with tRNA; the sequence is KDQ. The Cysteine persulfide intermediate role is filled by Cys-202. The tract at residues 308–309 is interaction with tRNA; the sequence is RY.

Belongs to the MnmA/TRMU family.

It is found in the cytoplasm. The catalysed reaction is S-sulfanyl-L-cysteinyl-[protein] + uridine(34) in tRNA + AH2 + ATP = 2-thiouridine(34) in tRNA + L-cysteinyl-[protein] + A + AMP + diphosphate + H(+). Catalyzes the 2-thiolation of uridine at the wobble position (U34) of tRNA, leading to the formation of s(2)U34. The protein is tRNA-specific 2-thiouridylase MnmA of Clostridium botulinum (strain Eklund 17B / Type B).